The following is a 302-amino-acid chain: 33 kDa chaperonin (302 aa).

Cystine bridges form between C247–C249 and C280–C283.

This sequence belongs to the HSP33 family. Post-translationally, under oxidizing conditions two disulfide bonds are formed involving the reactive cysteines. Under reducing conditions zinc is bound to the reactive cysteines and the protein is inactive.

It localises to the cytoplasm. Functionally, redox regulated molecular chaperone. Protects both thermally unfolding and oxidatively damaged proteins from irreversible aggregation. Plays an important role in the bacterial defense system toward oxidative stress. The chain is 33 kDa chaperonin from Prochlorococcus marinus (strain AS9601).